A 422-amino-acid chain; its full sequence is MSAEKITQSKDGLNVPNEPIIPFIIGDGIGPDIWKAASRVIDAAVEKAYNGEKRIEWKEVLAGQKAYDETGEWLPQETLETIKEYLIAVKGPLTTPIGGGIRSLNVALRQELDLFTCLRPVRWFKGVPSPVKRPEDVDMVIFRENTEDIYAGIEFKQGTSEVKKVIDFLQNEMGATNIRFPETSGIGIKPVSKEGTERLVRAAIQYALDNNRKSVTLVHKGNIMKFTEGSFKQWGYDLAHNEFGDKVFTWQQYDEIVEQKGKDAANEAQSKAEQEGKIIIKDSIADIFLQQILTRPAEHDVVATMNLNGDYISDALAAQVGGIGIAPGANINYETGHAIFEATHGTAPKYAGLNKVNPSSEILSSVLMLEHLGWQEAADKITDSIEATIASKIVTYDFARLMDGAKEVSTSDFADELIKNIR.

Threonine 94 is an NADP(+) binding site. D-threo-isocitrate is bound by residues serine 103, asparagine 105, arginine 109, arginine 119, and arginine 143. Mg(2+) is bound at residue aspartate 310. NADP(+) contacts are provided by residues 344–350 (HGTAPKY), asparagine 357, tyrosine 396, and arginine 400.

It belongs to the isocitrate and isopropylmalate dehydrogenases family. In terms of assembly, homodimer. Mg(2+) serves as cofactor. It depends on Mn(2+) as a cofactor.

The enzyme catalyses D-threo-isocitrate + NADP(+) = 2-oxoglutarate + CO2 + NADPH. Its function is as follows. Catalyzes the oxidative decarboxylation of isocitrate to 2-oxoglutarate and carbon dioxide with the concomitant reduction of NADP(+). The sequence is that of Isocitrate dehydrogenase [NADP] (icd) from Staphylococcus epidermidis (strain ATCC 35984 / DSM 28319 / BCRC 17069 / CCUG 31568 / BM 3577 / RP62A).